Reading from the N-terminus, the 677-residue chain is UPF0652 protein (677 aa).

Residues 38-84 (ETPGMCCECTDQPAEVVCLQCQDELCTVCSTSLHRRGSRRSHIFKNK) form a B box-type; atypical zinc finger. Zn(2+) contacts are provided by C43, C46, C66, and H71. Residues 91–111 (YDELNKRDRQPPLHGKEDEKV) show a composition bias toward basic and acidic residues. 2 disordered regions span residues 91–142 (YDEL…NNNI) and 156–192 (LNPL…IDED). The segment covering 113–126 (NNNNNNNNTNNTNN) has biased composition (low complexity). The segment covering 163-178 (HTNQQRNGGGSNNHQI) has biased composition (polar residues).

Belongs to the UPF0652 family.

This is UPF0652 protein from Dictyostelium discoideum (Social amoeba).